The chain runs to 303 residues: Dipeptide transport system permease protein DppB (303 aa).

Helical transmembrane passes span 9-29 (LGLLLLTLFLIVTLTFFMMQV), 62-82 (YFIYVGHMFTGNFGTSFIYTN), 93-113 (LPVSMQLGTQALILGTVLGAL), 129-149 (IFGFLSVLGISVPSFVIGTLI), 166-186 (GTFSQTIMPTIALSFAPMAVV), 227-247 (IPMLTLIGPMAAGLLTGSVLI), and 269-289 (FPVIMATTIVYAVILMVFILV). Residues 93–290 (LPVSMQLGTQ…VILMVFILVT (198 aa)) form the ABC transmembrane type-1 domain.

This sequence belongs to the binding-protein-dependent transport system permease family. OppBC subfamily. As to quaternary structure, the complex is composed of two ATP-binding proteins (DppD and DppF), two transmembrane proteins (DppB and DppC) and a solute-binding protein (DppA).

It is found in the cell membrane. In terms of biological role, part of the ABC transporter DppABCDF involved in dipeptide transport. Responsible for the translocation of the substrate across the membrane. This is Dipeptide transport system permease protein DppB from Lactococcus lactis subsp. cremoris (strain MG1363).